A 64-amino-acid chain; its full sequence is Small ribosomal subunit protein bS21 (64 aa).

This sequence belongs to the bacterial ribosomal protein bS21 family.

This Amoebophilus asiaticus (strain 5a2) protein is Small ribosomal subunit protein bS21.